Consider the following 225-residue polypeptide: Platelet-derived growth factor subunit B (225 aa).

A signal peptide spans 1–12 (LPLCCYLRLVSA). A propeptide spans 13-73 (EGDPIPEELY…ESESSSRGRR (61 aa)) (removed in mature form). An N-linked (GlcNAc...) asparagine glycan is attached at asparagine 55. Cystine bridges form between cysteine 89/cysteine 133, cysteine 122/cysteine 170, and cysteine 126/cysteine 172. A propeptide spans 183-225 (RSPGTSREHRAKTPQTRVTVRTVRIRRPPKGKHRKFKHTHDKK) (removed in mature form).

The protein belongs to the PDGF/VEGF growth factor family. As to quaternary structure, antiparallel homodimer; disulfide-linked. Antiparallel heterodimer with PDGFA; disulfide-linked. The PDGFB homodimer interacts with PDGFRA and PDGFRB homodimers, and with heterodimers formed by PDGFRA and PDGFRB. The heterodimer composed of PDGFA and PDGFB interacts with PDGFRB homodimers, and with heterodimers formed by PDGFRA and PDGFRB. Interacts with XLKD1. Interacts with LRP1. Interacts with SORL1 (via the N-terminal ectodomain). Interacts with CD82; this interaction inhibits PDGFB-mediated signaling pathway. Expressed in a distinct subpopulation of smooth muscle cells in injured arteries.

Its subcellular location is the secreted. Growth factor that plays an essential role in the regulation of embryonic development, cell proliferation, cell migration, survival and chemotaxis. Potent mitogen for cells of mesenchymal origin. Required for normal proliferation and recruitment of pericytes and vascular smooth muscle cells in the central nervous system, skin, lung, heart and placenta. Required for normal blood vessel development, and for normal development of kidney glomeruli. Plays an important role in wound healing. Signaling is modulated by the formation of heterodimers with PDGFA. The protein is Platelet-derived growth factor subunit B (Pdgfb) of Rattus norvegicus (Rat).